The chain runs to 156 residues: Transcriptional repressor NrdR (156 aa).

The segment at 3 to 34 is a zinc-finger region; the sequence is CPYCGHLDNKVIDSRINKDATITRRRRSCLAC. Positions 49 to 139 constitute an ATP-cone domain; it reads PMLVKKDGRR…VYRQFKDVDE (91 aa).

It belongs to the NrdR family. Zn(2+) serves as cofactor.

Negatively regulates transcription of bacterial ribonucleotide reductase nrd genes and operons by binding to NrdR-boxes. The sequence is that of Transcriptional repressor NrdR from Desulfotalea psychrophila (strain LSv54 / DSM 12343).